Consider the following 706-residue polypeptide: Complement C1r-B subcomponent (706 aa).

An N-terminal signal peptide occupies residues 1 to 16 (MWLFALLVTLFYGVEG). The CUB 1 domain occupies 17-140 (SIYLPQKLYG…KGFLAYYQAV (124 aa)). Positions 65, 73, and 118 each coordinate Ca(2+). The cysteines at positions 70 and 88 are disulfide-linked. The N-linked (GlcNAc...) asparagine glycan is linked to Asn-124. Ca(2+)-binding residues include Asp-141, Leu-142, and Glu-144. The region spanning 141–189 (DLDECASQPNSVEEGLQPRCQHLCHNYVGGYFCSCHPGYELQKDGQSCQ) is the EGF-like; calcium-binding domain. Disulfide bonds link Cys-145–Cys-164, Cys-160–Cys-173, Cys-175–Cys-188, and Cys-192–Cys-219. Ca(2+)-binding residues include Asn-166, Tyr-167, and Gly-170. Position 166 is a (3R)-3-hydroxyasparagine (Asn-166). The CUB 2 domain maps to 192 to 304 (CSSELYTEPS…RGWKLHYTTE (113 aa)). Ser-205 carries the phosphoserine; by CK2 modification. Asn-220 carries N-linked (GlcNAc...) asparagine glycosylation. Asp-242, Asp-252, Asp-289, and Asp-293 together coordinate Ca(2+). A disulfide bridge links Cys-249 with Cys-267. 2 Sushi domains span residues 306–372 (IKCP…RCKI) and 373–448 (KNCG…RCLP). 5 disulfides stabilise this stretch: Cys-308–Cys-357, Cys-337–Cys-370, Cys-375–Cys-428, Cys-405–Cys-446, and Cys-450–Cys-578. The region spanning 463–703 (IIGGQPARPG…YVDWIKKEMG (241 aa)) is the Peptidase S1 domain. Active-site charge relay system residues include His-501 and Asp-558. Asn-582 is a glycosylation site (N-linked (GlcNAc...) asparagine). 2 disulfide bridges follow: Cys-621–Cys-640 and Cys-651–Cys-681. Ser-655 acts as the Charge relay system in catalysis.

This sequence belongs to the peptidase S1 family. As to quaternary structure, core component of the complement C1 complex, a calcium-dependent complex composed of 1 molecule of the C1Q subcomplex, 2 molecules of C1R and 2 molecules of C1S. The C1Q subcomplex is composed 18 subunits: 3 chains of C1QA, C1QB, and C1QC trimerize to form 6 collagen-like triple helices connected to six globular ligand-recognition modules. Within the C1 complex, C1R is a dimer of identical chains, each of which is activated by cleavage into two chains, heavy and light, connected by disulfide bonds. Cleaved and activated by autocatalytic processing to generate Complement C1r subcomponent heavy and light chains that are connected by disulfide bonds. Post-translationally, the iron and 2-oxoglutarate dependent 3-hydroxylation of aspartate and asparagine is (R) stereospecific within EGF domains.

It is found in the secreted. It localises to the cell surface. The enzyme catalyses Selective cleavage of Lys(or Arg)-|-Ile bond in complement subcomponent C1s to form the active form of C1s (EC 3.4.21.42).. With respect to regulation, activated by the C1Q subcomplex of the C1 complex following C1Q binding to immunoglobulins (IgG or IgM) complexed with antigens to form antigen-antibody complexes on the surface of pathogens. Immunoglobulin-binding promotes autoactivation of C1R, which results in the cleavage of the Arg-Ile bond in the catalytic domain. Its function is as follows. Serine protease component of the complement C1 complex, a multiprotein complex that initiates the classical pathway of the complement system, a cascade of proteins that leads to phagocytosis and breakdown of pathogens and signaling that strengthens the adaptive immune system. C1R catalyzes the first enzymatic step in the classical complement pathway: it is activated by the C1Q subcomplex of the C1 complex, which associates with IgG or IgM immunoglobulins complexed with antigens to form antigen-antibody complexes on the surface of pathogens. Immunoglobulin-binding promotes the autocatalytic cleavage and activation of C1R. Activated C1R then cleaves and activates C1S, the second protease of the classical complement pathway. It is unclear if C1R activates C1S within single, strained C1 complexes or between neighboring C1 complexes on surfaces. The sequence is that of Complement C1r-B subcomponent (C1rb) from Mus musculus (Mouse).